The chain runs to 213 residues: uncharacterized protein (213 aa).

A signal peptide spans 1–21; sequence MKKILFLTVICFCLSSIKAYA.

This is an uncharacterized protein from Rickettsia prowazekii (strain Madrid E).